A 538-amino-acid chain; its full sequence is ATP synthase subunit beta 2 (538 aa).

A compositionally biased stretch (polar residues) spans 1-10; that stretch reads MADPQATNGT. Residues 1 to 30 form a disordered region; sequence MADPQATNGTGAACAERDASDVGDVSDVGD. 185–192 is an ATP binding site; that stretch reads GGAGVGKT. Over residues 494–505 the composition is skewed to basic and acidic residues; the sequence is AAAREADARREA. Positions 494–538 are disordered; sequence AAAREADARREAAAAASVAGPGTTSGTTSDPASGSAEPQGARHGR. Residues 506–529 show a composition bias toward low complexity; sequence AAAASVAGPGTTSGTTSDPASGSA.

The protein belongs to the ATPase alpha/beta chains family. As to quaternary structure, F-type ATPases have 2 components, CF(1) - the catalytic core - and CF(0) - the membrane proton channel. CF(1) has five subunits: alpha(3), beta(3), gamma(1), delta(1), epsilon(1). CF(0) has three main subunits: a(1), b(2) and c(9-12). The alpha and beta chains form an alternating ring which encloses part of the gamma chain. CF(1) is attached to CF(0) by a central stalk formed by the gamma and epsilon chains, while a peripheral stalk is formed by the delta and b chains.

It localises to the cell inner membrane. It carries out the reaction ATP + H2O + 4 H(+)(in) = ADP + phosphate + 5 H(+)(out). Its function is as follows. Produces ATP from ADP in the presence of a proton gradient across the membrane. The catalytic sites are hosted primarily by the beta subunits. This Burkholderia pseudomallei (strain K96243) protein is ATP synthase subunit beta 2.